Reading from the N-terminus, the 657-residue chain is Glycogen debranching enzyme (657 aa).

Aspartate 336 functions as the Nucleophile in the catalytic mechanism. Glutamate 371 functions as the Proton donor in the catalytic mechanism. The tract at residues 460–479 (ANGEENRDGTNNNYSNNHGK) is disordered.

It belongs to the glycosyl hydrolase 13 family.

The catalysed reaction is Hydrolysis of (1-&gt;6)-alpha-D-glucosidic linkages to branches with degrees of polymerization of three or four glucose residues in limit dextrin.. It functions in the pathway glycan degradation; glycogen degradation. Its function is as follows. Removes maltotriose and maltotetraose chains that are attached by 1,6-alpha-linkage to the limit dextrin main chain, generating a debranched limit dextrin. The protein is Glycogen debranching enzyme of Shigella dysenteriae serotype 1 (strain Sd197).